A 132-amino-acid polypeptide reads, in one-letter code: CLAVATA3/ESR (CLE)-related protein ESR2 (132 aa).

The N-terminal stretch at 1 to 26 (MASRMGMVAIVSLFVCALVASTSVNA) is a signal peptide. The segment at 68-132 (NRASKQLDSE…IGPPPFLDRY (65 aa)) is disordered. Hydroxyproline occurs at positions 82 and 85. A glycan (O-linked (Ara...) hydroxyproline) is linked at P85. Residues 123–132 (IGPPPFLDRY) show a composition bias toward pro residues.

This sequence belongs to the CLV3/ESR signal peptide family. The O-glycosylation (arabinosylation) of the hydroxyproline Pro-85 enhances binding affinity of the ESR2p peptide for its receptor. Seed endosperm.

The protein resides in the secreted. Its subcellular location is the extracellular space. Its function is as follows. Extracellular signal peptide that regulates cell fate. The chain is CLAVATA3/ESR (CLE)-related protein ESR2 from Zea mays (Maize).